The primary structure comprises 692 residues: Translation initiation factor IF-2 (692 aa).

Positions 51 to 114 are disordered; sequence KAKPENAKKG…KPAETPGKIT (64 aa). Low complexity predominate over residues 59–84; that stretch reads KGQNQKQSNNQQQNRQKQNQKNQSKP. Residues 85–94 are compositionally biased toward basic residues; it reads NKNKKQKGPK. Residues 193–362 enclose the tr-type G domain; sequence ERPAVVTIMG…LLVSEVEELK (170 aa). Residues 202 to 209 form a G1 region; the sequence is GHVDHGKT. 202 to 209 is a GTP binding site; the sequence is GHVDHGKT. Positions 227–231 are G2; sequence GITQH. Residues 248-251 are G3; it reads DTPG. Residues 248–252 and 302–305 each bind GTP; these read DTPGH and NKMD. Residues 302–305 are G4; that stretch reads NKMD. The interval 338-340 is G5; that stretch reads SAI.

Belongs to the TRAFAC class translation factor GTPase superfamily. Classic translation factor GTPase family. IF-2 subfamily.

It is found in the cytoplasm. In terms of biological role, one of the essential components for the initiation of protein synthesis. Protects formylmethionyl-tRNA from spontaneous hydrolysis and promotes its binding to the 30S ribosomal subunits. Also involved in the hydrolysis of GTP during the formation of the 70S ribosomal complex. The sequence is that of Translation initiation factor IF-2 from Oceanobacillus iheyensis (strain DSM 14371 / CIP 107618 / JCM 11309 / KCTC 3954 / HTE831).